Here is a 338-residue protein sequence, read N- to C-terminus: Glyceraldehyde-3-phosphate dehydrogenase, cytosolic (338 aa).

Residues 14-15 (RI), Asp36, and Arg83 contribute to the NAD(+) site. D-glyceraldehyde 3-phosphate contacts are provided by residues 154-156 (SCT), Thr185, 214-215 (TG), and Arg237. Cys155 (nucleophile) is an active-site residue. Asn319 contributes to the NAD(+) binding site.

The protein belongs to the glyceraldehyde-3-phosphate dehydrogenase family. In terms of assembly, homotetramer.

It localises to the cytoplasm. The catalysed reaction is D-glyceraldehyde 3-phosphate + phosphate + NAD(+) = (2R)-3-phospho-glyceroyl phosphate + NADH + H(+). It functions in the pathway carbohydrate degradation; glycolysis; pyruvate from D-glyceraldehyde 3-phosphate: step 1/5. In terms of biological role, key enzyme in glycolysis that catalyzes the first step of the pathway by converting D-glyceraldehyde 3-phosphate (G3P) into 3-phospho-D-glyceroyl phosphate. Essential for the maintenance of cellular ATP levels and carbohydrate metabolism. The polypeptide is Glyceraldehyde-3-phosphate dehydrogenase, cytosolic (GAPC1) (Pisum sativum (Garden pea)).